We begin with the raw amino-acid sequence, 465 residues long: Mothers against decapentaplegic homolog 5 (465 aa).

T2 is modified (N-acetylthreonine). The 125-residue stretch at 13–137 (PAVKRLLGWK…YKRVESPVLP (125 aa)) folds into the MH1 domain. 4 residues coordinate Zn(2+): C65, C110, C122, and H127. A disordered region spans residues 163–243 (NEPHMPQNAT…GQDNSQPMDT (81 aa)). A compositionally biased stretch (polar residues) spans 169–182 (QNATFPDSFHQPNS). Residues 186 to 197 (PLSPNSPYPPSP) are compositionally biased toward pro residues. Residues 198–214 (ASSTYPNSPASSGPGSP) are compositionally biased toward low complexity. Residues 234–243 (GQDNSQPMDT) are compositionally biased toward polar residues. The MH2 domain maps to 271 to 465 (WCSIVYYELN…SPLNPISSVS (195 aa)). Phosphoserine occurs at positions 463 and 465.

This sequence belongs to the dwarfin/SMAD family. In terms of assembly, homodimer. Forms trimers with the co-SMAD SMAD4. Interacts with PEBP2-alpha subunit and SMURF1. Interacts with SUV39H1 and SUV39H2. Interacts (via MH2 domain) with LEMD3. Interacts with WWP1. Interacts with TMEM119. Interacts with ZNF8. Interacts with RANBP3L. Interacts with HK1. Interacts with HGS; this interaction attenuates BMP signaling. Post-translationally, phosphorylated on serine by BMP (bone morphogenetic proteins) type 1 receptor kinase. Ubiquitin-mediated proteolysis by SMAD-specific E3 ubiquitin ligase SMURF1.

It localises to the cytoplasm. The protein resides in the nucleus. Its subcellular location is the mitochondrion. Its function is as follows. Transcriptional regulator that plays a role in various cellular processes including embryonic development, cell differentiation, angiogenesis and tissue homeostasis. Upon BMP ligand binding to their receptors at the cell surface, is phosphorylated by activated type I BMP receptors (BMPRIs) and associates with SMAD4 to form a heteromeric complex which translocates into the nucleus acting as transcription factor. In turn, the hetero-trimeric complex recognizes cis-regulatory elements containing Smad Binding Elements (SBEs) to modulate the outcome of the signaling network. Non-phosphorylated SMAD5 has a cytoplasmic role in energy metabolism regulation by promoting mitochondrial respiration and glycolysis in response to cytoplasmic pH changes. Mechanistically, interacts with hexokinase 1/HK1 and thereby accelerates glycolysis. The protein is Mothers against decapentaplegic homolog 5 (Smad5) of Rattus norvegicus (Rat).